The chain runs to 157 residues: SsrA-binding protein (157 aa).

The tract at residues 130–157 (KAEHDKRDTIKEREGKREVERVMKSRHR) is disordered.

Belongs to the SmpB family.

The protein resides in the cytoplasm. Required for rescue of stalled ribosomes mediated by trans-translation. Binds to transfer-messenger RNA (tmRNA), required for stable association of tmRNA with ribosomes. tmRNA and SmpB together mimic tRNA shape, replacing the anticodon stem-loop with SmpB. tmRNA is encoded by the ssrA gene; the 2 termini fold to resemble tRNA(Ala) and it encodes a 'tag peptide', a short internal open reading frame. During trans-translation Ala-aminoacylated tmRNA acts like a tRNA, entering the A-site of stalled ribosomes, displacing the stalled mRNA. The ribosome then switches to translate the ORF on the tmRNA; the nascent peptide is terminated with the 'tag peptide' encoded by the tmRNA and targeted for degradation. The ribosome is freed to recommence translation, which seems to be the essential function of trans-translation. This Acidovorax sp. (strain JS42) protein is SsrA-binding protein.